Reading from the N-terminus, the 498-residue chain is Glycerol kinase (498 aa).

Thr-12 provides a ligand contact to ADP. ATP-binding residues include Thr-12, Thr-13, and Ser-14. Sn-glycerol 3-phosphate is bound at residue Thr-12. ADP is bound at residue Arg-16. 4 residues coordinate sn-glycerol 3-phosphate: Arg-82, Glu-83, Tyr-134, and Asp-244. Arg-82, Glu-83, Tyr-134, Asp-244, and Gln-245 together coordinate glycerol. ADP is bound by residues Thr-266 and Gly-310. Positions 266, 310, 314, and 411 each coordinate ATP. Gly-411 and Asn-415 together coordinate ADP.

This sequence belongs to the FGGY kinase family.

It catalyses the reaction glycerol + ATP = sn-glycerol 3-phosphate + ADP + H(+). It participates in polyol metabolism; glycerol degradation via glycerol kinase pathway; sn-glycerol 3-phosphate from glycerol: step 1/1. Inhibited by fructose 1,6-bisphosphate (FBP). In terms of biological role, key enzyme in the regulation of glycerol uptake and metabolism. Catalyzes the phosphorylation of glycerol to yield sn-glycerol 3-phosphate. This chain is Glycerol kinase, found in Chloroflexus aurantiacus (strain ATCC 29366 / DSM 635 / J-10-fl).